We begin with the raw amino-acid sequence, 350 residues long: Anthranilate phosphoribosyltransferase (350 aa).

5-phospho-alpha-D-ribose 1-diphosphate contacts are provided by residues Gly93, 96 to 97 (GD), Thr101, 103 to 106 (NIST), 121 to 129 (KHGNRSASG), and Ser133. Gly93 serves as a coordination point for anthranilate. Mg(2+) is bound at residue Ser105. An anthranilate-binding site is contributed by Asn124. Residue Arg179 participates in anthranilate binding. Residues Asp238 and Glu239 each coordinate Mg(2+).

Belongs to the anthranilate phosphoribosyltransferase family. In terms of assembly, homodimer. It depends on Mg(2+) as a cofactor.

The catalysed reaction is N-(5-phospho-beta-D-ribosyl)anthranilate + diphosphate = 5-phospho-alpha-D-ribose 1-diphosphate + anthranilate. It functions in the pathway amino-acid biosynthesis; L-tryptophan biosynthesis; L-tryptophan from chorismate: step 2/5. In terms of biological role, catalyzes the transfer of the phosphoribosyl group of 5-phosphorylribose-1-pyrophosphate (PRPP) to anthranilate to yield N-(5'-phosphoribosyl)-anthranilate (PRA). This is Anthranilate phosphoribosyltransferase from Parasynechococcus marenigrum (strain WH8102).